The sequence spans 291 residues: Elongation factor Ts (291 aa).

The interval 80-83 (TDFV) is involved in Mg(2+) ion dislocation from EF-Tu.

Belongs to the EF-Ts family.

It localises to the cytoplasm. Associates with the EF-Tu.GDP complex and induces the exchange of GDP to GTP. It remains bound to the aminoacyl-tRNA.EF-Tu.GTP complex up to the GTP hydrolysis stage on the ribosome. This Acinetobacter baylyi (strain ATCC 33305 / BD413 / ADP1) protein is Elongation factor Ts.